A 469-amino-acid polypeptide reads, in one-letter code: Regulator of G-protein signaling 7 (469 aa).

The region spanning glutamate 37 to threonine 112 is the DEP domain. A phosphoserine mark is found at serine 229 and serine 241. The tract at residues asparagine 235–aspartate 256 is disordered. Threonine 243 bears the Phosphothreonine mark. The G protein gamma domain maps to glutamate 255–leucine 316. The RGS domain maps to glycine 333–leucine 448. At serine 434 the chain carries Phosphoserine.

In terms of assembly, interacts with GNB5, forming the RGS7-GNB5 complex. Interacts with GPR158; promotes the GTPase activator activity of the RGS7-GNB5 complex in absence of glycine, in contrast GTPase activator activity of the RGS7-GNB5 complex is inhibited in presence of glycine. Interacts with GPR179. Interacts with PKD1; this prevents rapid proteasomal degradation. Interacts with RGS7BP, leading to regulate the subcellular location of the heterodimer formed with GNB5. Interacts (phosphorylated form) with 14-3-3 protein YWHAQ. Interacts with SNAPIN. Interacts with GNAI1. Interacts with GNAO1, GNAI3 and GNAZ. Palmitoylated. Post-translationally, ubiquitinated, leading to rapid proteasomal degradation. In terms of processing, phosphorylation and subsequent interaction with 14-3-3 proteins inhibits GAP activity. Detected in retina (at protein level).

It localises to the cytoplasm. It is found in the cytosol. The protein localises to the cell membrane. The protein resides in the membrane. GTPase activator component of the RGS7-GNB5 complex that regulates G protein-coupled receptor signaling cascades. The RGS7-GNB5 complex acts as an inhibitor signal transduction by promoting the GTPase activity of G protein alpha subunits, such as GNAO1, thereby driving them into their inactive GDP-bound form. May play a role in synaptic vesicle exocytosis. Glycine-dependent regulation of the RGS7-GNB5 complex by GPR158 affects mood and cognition via its ability to regulate neuronal excitability in L2/L3 pyramidal neurons of the prefrontal cortex. Modulates the activity of potassium channels that are activated by GNAO1 in response to muscarinic acetylcholine receptor M2/CHRM2 signaling. The sequence is that of Regulator of G-protein signaling 7 (RGS7) from Bos taurus (Bovine).